We begin with the raw amino-acid sequence, 94 residues long: Conotoxin Cal22a (94 aa).

Positions Met1–Gly24 are cleaved as a signal peptide. A propeptide spanning residues Gly25 to Ala44 is cleaved from the precursor.

Contains 4 disulfide bonds. As to expression, expressed by the venom duct.

Its subcellular location is the secreted. Probable neurotoxin with unknown target. Possibly targets ion channels. The sequence is that of Conotoxin Cal22a from Californiconus californicus (California cone).